The chain runs to 351 residues: Nicotinate-nucleotide--dimethylbenzimidazole phosphoribosyltransferase (351 aa).

E317 functions as the Proton acceptor in the catalytic mechanism.

This sequence belongs to the CobT family.

The enzyme catalyses 5,6-dimethylbenzimidazole + nicotinate beta-D-ribonucleotide = alpha-ribazole 5'-phosphate + nicotinate + H(+). Its pathway is nucleoside biosynthesis; alpha-ribazole biosynthesis; alpha-ribazole from 5,6-dimethylbenzimidazole: step 1/2. In terms of biological role, catalyzes the synthesis of alpha-ribazole-5'-phosphate from nicotinate mononucleotide (NAMN) and 5,6-dimethylbenzimidazole (DMB). The polypeptide is Nicotinate-nucleotide--dimethylbenzimidazole phosphoribosyltransferase (Ectopseudomonas mendocina (strain ymp) (Pseudomonas mendocina)).